Consider the following 291-residue polypeptide: GCN5-related N-acetyltransferase 4, chloroplastic (291 aa).

Residues 1 to 61 constitute a chloroplast transit peptide; sequence MRSTPLGTTA…PSQINSGACN (61 aa). The N-acetyltransferase domain occupies 76-280; the sequence is IVVREARLED…RFTFMMKLVN (205 aa). Residues 199 to 201 and 207 to 212 contribute to the acetyl-CoA site; these read VAV and RKGIAK. Lysine 217 carries the N6-acetyllysine modification. Acetyl-CoA-binding positions include 238–240 and tyrosine 245; that span reads NLG. The active-site Proton donor is the tyrosine 245. N6-acetyllysine occurs at positions 254 and 265.

Belongs to the acetyltransferase family. GNAT subfamily. Oligomer. Autoacetylated at K-217, K-254 and K-265. Expressed in green tissues.

The protein localises to the plastid. The protein resides in the chloroplast. The enzyme catalyses an N-terminal L-alpha-aminoacyl-[protein] + acetyl-CoA = N-terminal N(alpha)-acetyl-L-alpha-aminoacyl-[protein] + CoA + H(+). The catalysed reaction is L-lysyl-[protein] + acetyl-CoA = N(6)-acetyl-L-lysyl-[protein] + CoA + H(+). It catalyses the reaction N-terminal L-alanyl-[protein] + acetyl-CoA = N-terminal N(alpha)-acetyl-L-alanyl-[protein] + CoA + H(+). It carries out the reaction N-terminal L-seryl-[protein] + acetyl-CoA = N-terminal N(alpha)-acetyl-L-seryl-[protein] + CoA + H(+). The enzyme catalyses N-terminal L-threonyl-[protein] + acetyl-CoA = N-terminal N(alpha)-acetyl-L-threonyl-[protein] + CoA + H(+). The catalysed reaction is N-terminal L-methionyl-[protein] + acetyl-CoA = N-terminal N(alpha)-acetyl-L-methionyl-[protein] + CoA + H(+). It catalyses the reaction N-terminal L-valyl-[protein] + acetyl-CoA = N-terminal N(alpha)-acetyl-L-valyl-[protein] + CoA + H(+). It carries out the reaction N-terminal glycyl-[protein] + acetyl-CoA = N-terminal N(alpha)-acetylglycyl-[protein] + CoA + H(+). Protein acetyltransferase with dual specificity triggering both N-alpha-acetylation (NTA), with a large spectrum of modified N-termini, including methionine, alanine, serine, threonine and to a lower extent glycine and valine as substrates, and epsilon-lysine acetylation (KA) of several plastid proteins. This chain is GCN5-related N-acetyltransferase 4, chloroplastic, found in Arabidopsis thaliana (Mouse-ear cress).